The primary structure comprises 425 residues: MTFQNTREFAKQLDAQDALNHYQEQFIFPKVNDKRVIYFTGNSLGLQPKRTKAYIDEVMNDWAELAVEGHFYAEKPWWDYQERFSEPLSKIVGALPSEVTVMNTLTVNLHLLMVSFYQPKGKRYKIICEEKAFPSDQYMFQSQVHFHGYKPEDAIVEIKRREGEHNIRLEDVLAKIEEVGDELALVLIGGVNYYTGQVFDIKTITAAGQKAGAKVGWDLAHAAGNIKLELHDWNVDFAAWCSYKYMNSGPGNASGVFVHERHHNDPDLPRFAGWWGHNKERRFKMEPNFDPVHGAGGWQISNLPVLSLAPYLASVEMFAEVGMDALIAKRDHITSYLEFILHEIDKEVESTFEIITPSNPEERASQLSVFLHGEGRSLFDYLMKNGVITDWREPNVIRLAPVPLYCSYEDMYDFGQILKKGILGK.

Residues Leu-105, Thr-106, 133–136, Asp-218, His-221, and Tyr-243 each bind pyridoxal 5'-phosphate; that span reads FPSD. N6-(pyridoxal phosphate)lysine is present on Lys-244. Positions 274 and 302 each coordinate pyridoxal 5'-phosphate.

This sequence belongs to the kynureninase family. Homodimer. It depends on pyridoxal 5'-phosphate as a cofactor.

The enzyme catalyses L-kynurenine + H2O = anthranilate + L-alanine + H(+). The catalysed reaction is 3-hydroxy-L-kynurenine + H2O = 3-hydroxyanthranilate + L-alanine + H(+). The protein operates within amino-acid degradation; L-kynurenine degradation; L-alanine and anthranilate from L-kynurenine: step 1/1. Its pathway is cofactor biosynthesis; NAD(+) biosynthesis; quinolinate from L-kynurenine: step 2/3. Its function is as follows. Catalyzes the cleavage of L-kynurenine (L-Kyn) and L-3-hydroxykynurenine (L-3OHKyn) into anthranilic acid (AA) and 3-hydroxyanthranilic acid (3-OHAA), respectively. The polypeptide is Kynureninase (Flavobacterium johnsoniae (strain ATCC 17061 / DSM 2064 / JCM 8514 / BCRC 14874 / CCUG 350202 / NBRC 14942 / NCIMB 11054 / UW101) (Cytophaga johnsonae)).